Consider the following 282-residue polypeptide: Undecaprenyl-diphosphatase (282 aa).

A run of 7 helical transmembrane segments spans residues 6–26, 45–65, 85–105, 112–132, 200–220, 230–250, and 262–282; these read LYFV…FIPV, SGKV…MWIF, LFTR…AIFI, FYHP…MLWV, ATEF…VYDM, HDLG…LLVV, and YRGF…WLAF.

It belongs to the UppP family.

The protein resides in the cell inner membrane. The enzyme catalyses di-trans,octa-cis-undecaprenyl diphosphate + H2O = di-trans,octa-cis-undecaprenyl phosphate + phosphate + H(+). In terms of biological role, catalyzes the dephosphorylation of undecaprenyl diphosphate (UPP). Confers resistance to bacitracin. The polypeptide is Undecaprenyl-diphosphatase (Bordetella avium (strain 197N)).